Reading from the N-terminus, the 242-residue chain is MKLFVYHTPEATPTDQLPDCAVVIDVLRATTTIATALHAGAEAVQTFADLDELFQFSETWQQTPFLRAGERGGQQVEGCELGNSPRSCTPEMVAGKRLFLTTTNGTRALKRVEQAPTVITAAQVNRQSVVKFLQTEQPDTVWFVGSGWQGDYSLEDTVCAGAIAKSLWNGDSDQLGNDEVIGAISLYQQWQQDLFGLFKLASHGQRLLRLDNEIDIRYCAQSDTLAVLPIQTEPGVLKAYRH.

Belongs to the ComB family. The cofactor is Mg(2+).

It carries out the reaction (2R)-O-phospho-3-sulfolactate + H2O = (2R)-3-sulfolactate + phosphate. This is Probable 2-phosphosulfolactate phosphatase from Picosynechococcus sp. (strain ATCC 27264 / PCC 7002 / PR-6) (Agmenellum quadruplicatum).